The primary structure comprises 187 residues: MTWSVFRSINTPTLDLSTALRSTRTPLVAAGVGCATFAGVSLFRMSSRSPPFASLSVSASSVKKEVVSTEKAPAALGPYSQAIKANNLVFLSGVLGLIPETGKFVSESVEDQTEQVLKNMGEILKASGADYSSVVKTTIMLADLADFKTVNEIYAKYFPAPSPARSTYQVAALPLNAKIEIECIATL.

A chloroplast-targeting transit peptide spans 1–58 (MTWSVFRSINTPTLDLSTALRSTRTPLVAAGVGCATFAGVSLFRMSSRSPPFASLSVS). Position 165 (Arg-165) interacts with substrate.

This sequence belongs to the RutC family. Expressed in leaves, petiols, petals, carpels and shoot apex.

It localises to the plastid. It is found in the chloroplast. It carries out the reaction 2-iminobutanoate + H2O = 2-oxobutanoate + NH4(+). The catalysed reaction is 2-iminopropanoate + H2O = pyruvate + NH4(+). It participates in amino-acid biosynthesis; L-isoleucine biosynthesis; 2-oxobutanoate from L-threonine. Its function is as follows. Hydrolyzes the Ser-derived enamine/imine product of Thr dehydratase, protecting the plastidial branched-chain aminotransferase BCAT3 (AC Q9M401) from inactivation. Involved in Ile biosynthesis. This Arabidopsis thaliana (Mouse-ear cress) protein is Reactive Intermediate Deaminase A, chloroplastic.